The primary structure comprises 91 residues: RNA-binding protein Hfq (91 aa).

The Sm domain maps to 9–69 (DRFLNMLRTG…ISTIMPSSFV (61 aa)).

The protein belongs to the Hfq family. In terms of assembly, homohexamer.

Its function is as follows. RNA chaperone that binds small regulatory RNA (sRNAs) and mRNAs to facilitate mRNA translational regulation in response to envelope stress, environmental stress and changes in metabolite concentrations. Also binds with high specificity to tRNAs. The polypeptide is RNA-binding protein Hfq (Pseudothermotoga lettingae (strain ATCC BAA-301 / DSM 14385 / NBRC 107922 / TMO) (Thermotoga lettingae)).